Consider the following 174-residue polypeptide: Alkyl hydroperoxide reductase AhpD (174 aa).

The Proton donor role is filled by C130. A disulfide bridge links C130 with C133. C133 functions as the Cysteine sulfenic acid (-SOH) intermediate in the catalytic mechanism.

This sequence belongs to the AhpD family. In terms of assembly, homotrimer.

It carries out the reaction N(6)-[(R)-dihydrolipoyl]-L-lysyl-[lipoyl-carrier protein] + a hydroperoxide = N(6)-[(R)-lipoyl]-L-lysyl-[lipoyl-carrier protein] + an alcohol + H2O. Its function is as follows. Antioxidant protein with alkyl hydroperoxidase activity. Required for the reduction of the AhpC active site cysteine residues and for the regeneration of the AhpC enzyme activity. This is Alkyl hydroperoxide reductase AhpD from Corynebacterium kroppenstedtii (strain DSM 44385 / JCM 11950 / CIP 105744 / CCUG 35717).